Reading from the N-terminus, the 471-residue chain is Glutamate--tRNA ligase 1 (471 aa).

The short motif at 10–20 (PSPTGYLHIGG) is the 'HIGH' region element. Zn(2+) is bound by residues Cys99, Cys101, Cys126, and Asp128. Positions 238–242 (RLSKR) match the 'KMSKS' region motif. Lys241 contributes to the ATP binding site.

This sequence belongs to the class-I aminoacyl-tRNA synthetase family. Glutamate--tRNA ligase type 1 subfamily. Monomer. Zn(2+) serves as cofactor.

The protein localises to the cytoplasm. The enzyme catalyses tRNA(Glu) + L-glutamate + ATP = L-glutamyl-tRNA(Glu) + AMP + diphosphate. Catalyzes the attachment of glutamate to tRNA(Glu) in a two-step reaction: glutamate is first activated by ATP to form Glu-AMP and then transferred to the acceptor end of tRNA(Glu). This Alkalilimnicola ehrlichii (strain ATCC BAA-1101 / DSM 17681 / MLHE-1) protein is Glutamate--tRNA ligase 1.